A 451-amino-acid polypeptide reads, in one-letter code: Probable D-serine dehydratase (451 aa).

Lysine 119 bears the N6-(pyridoxal phosphate)lysine mark.

The protein belongs to the serine/threonine dehydratase family. DsdA subfamily. Requires pyridoxal 5'-phosphate as cofactor.

It catalyses the reaction D-serine = pyruvate + NH4(+). The sequence is that of Probable D-serine dehydratase from Acidovorax sp. (strain JS42).